We begin with the raw amino-acid sequence, 1481 residues long: Coiled-coil domain-containing protein 88B (1481 aa).

Coiled-coil stretches lie at residues 200 to 225 (ELVA…RERD) and 258 to 491 (SHHL…GSQH). 3 disordered regions span residues 430–458 (ELQR…QDEV), 494–731 (LEEQ…AIPE), and 1331–1481 (PRRE…SLSQ). Ser-441 carries the post-translational modification Phosphoserine. Polar residues-rich tracts occupy residues 542 to 557 (ASYS…SQAP) and 568 to 590 (QMVS…TVET). Ser-649 carries the phosphoserine modification. Positions 660–695 (TLREPLKDQKALDRELELSKQQKETGRHEQRPKGLE) are enriched in basic and acidic residues. A coiled-coil region spans residues 731–1308 (EEQALRDEVA…KIMDQYRVLE (578 aa)). Ser-1353 and Ser-1384 each carry phosphoserine. Residues 1371-1386 (TGSSSPAPMRRVQSSL) are compositionally biased toward polar residues. The span at 1453–1472 (LSEHEADDTREAFQEQKPEK) shows a compositional bias: basic and acidic residues.

It belongs to the CCDC88 family. As to quaternary structure, homodimer. Interacts with DOCK8. Interacts (via C-terminus) with intact microtubules. Interacts with dynein-dynactin motor complex. Interacts (via C-terminus) with HSPA5. In terms of tissue distribution, abundantly expressed in immune cells, including both CD4(+) and CD8(+) T-cells and in myeloid cells (at protein level). Expressed in endothelium (at protein level). Expressed specifically in spleen, bone marrow, lymph nodes and thymus. Expressed in liver and heart.

The protein localises to the membrane. Its subcellular location is the cytoplasm. It is found in the cytoskeleton. The protein resides in the microtubule organizing center. It localises to the endoplasmic reticulum. The protein localises to the golgi apparatus. Its function is as follows. Acts as a positive regulator of T-cell maturation and inflammatory function. Required for several functions of T-cells in both the CD4(+) and the CD8(+) compartments and this includes expression of cell surface markers of activation, proliferation, and cytokine production in response to specific or non-specific stimulation and during the course of infection with the mouse malaria parasite Plasmodium berghei. Enhances NK cell cytotoxicity by positively regulating polarization of microtubule-organizing center (MTOC) to cytotoxic synapse, lytic granule transport along microtubules, and dynein-mediated clustering to MTOC. Interacts with HSPA5 and stabilizes the interaction between HSPA5 and ERN1, leading to suppression of ERN1-induced JNK activation and endoplasmic reticulum stress-induced apoptosis. In Mus musculus (Mouse), this protein is Coiled-coil domain-containing protein 88B (Ccdc88b).